The sequence spans 273 residues: Phosphatidylglycerol--prolipoprotein diacylglyceryl transferase (273 aa).

The next 7 helical transmembrane spans lie at 19–39 (VHWY…LASY), 55–75 (LVFY…VLFY), 90–110 (VWTG…AMIL), 125–145 (FIAP…FIGA), 174–194 (PSQI…LWWF), 202–222 (MAVS…VEFF), and 230–250 (GFIL…MLLI). Arginine 138 is an a 1,2-diacyl-sn-glycero-3-phospho-(1'-sn-glycerol) binding site.

This sequence belongs to the Lgt family.

The protein resides in the cell inner membrane. It carries out the reaction L-cysteinyl-[prolipoprotein] + a 1,2-diacyl-sn-glycero-3-phospho-(1'-sn-glycerol) = an S-1,2-diacyl-sn-glyceryl-L-cysteinyl-[prolipoprotein] + sn-glycerol 1-phosphate + H(+). Its pathway is protein modification; lipoprotein biosynthesis (diacylglyceryl transfer). Catalyzes the transfer of the diacylglyceryl group from phosphatidylglycerol to the sulfhydryl group of the N-terminal cysteine of a prolipoprotein, the first step in the formation of mature lipoproteins. In Acinetobacter baylyi (strain ATCC 33305 / BD413 / ADP1), this protein is Phosphatidylglycerol--prolipoprotein diacylglyceryl transferase.